Here is a 590-residue protein sequence, read N- to C-terminus: MAESINGLKRTHYAGKISTQQIGKKVTVMGWVQKRRDHGGVIFIDLRDRSGIVQVVFNPDNNERAFKKATELRSEYVIAVEGEVEKRPEGNINPDIPTGEIEIRGNRLRILDESETPPFEIDDDINVGEDLRLKYRYLDLRRPRMKKNLELRHRVMKTTRDYLDDNGFWEVETPILTRSTPEGARDYLVPSRIHPGHFYALPQSPQLFKQLLMVGGVERYFQIARCFRDEDLRANRQPEFTQIDIEMSFIDKEDVFSLVNGLMKRLFALVDIEIPEKIPVMPYQEAIDRFGSDKPDLRFGMELKDVSDVVKDSEFRVFSGVVKDGGQVKGINFKGGAISPRSKIDGYTDYVKIFGAKGLAWIALKENGLKSPIAKFLSEKELEGIKEKMGAQTGDLLLFVADKPSIVADALGNLRLKIAREEGLIPDGVYKFVWVVDFPLMEYDEDEGRYVAKHHPFTAPLDEDIPLLDSNPEKIRSKAYDFVLNGEELGGGSIRINNKDLQMKVFNALNISEEKASDKFGFLLEAFNYGAPPHGGIAFGLDRLLMVLSGSESMRDVIAFPKTQKASSPLTEAPSTVAEKQLRELHIKID.

E182 is an L-aspartate binding site. The aspartate stretch occupies residues 206–209; the sequence is QLFK. R228 contacts L-aspartate. Residues 228–230 and Q237 each bind ATP; that span reads RDE. H454 contributes to the L-aspartate binding site. E488 provides a ligand contact to ATP. R495 contributes to the L-aspartate binding site. ATP is bound at residue 540–543; that stretch reads GLDR.

It belongs to the class-II aminoacyl-tRNA synthetase family. Type 1 subfamily. As to quaternary structure, homodimer.

It localises to the cytoplasm. The catalysed reaction is tRNA(Asx) + L-aspartate + ATP = L-aspartyl-tRNA(Asx) + AMP + diphosphate. In terms of biological role, aspartyl-tRNA synthetase with relaxed tRNA specificity since it is able to aspartylate not only its cognate tRNA(Asp) but also tRNA(Asn). Reaction proceeds in two steps: L-aspartate is first activated by ATP to form Asp-AMP and then transferred to the acceptor end of tRNA(Asp/Asn). This is Aspartate--tRNA(Asp/Asn) ligase from Halothermothrix orenii (strain H 168 / OCM 544 / DSM 9562).